The following is a 512-amino-acid chain: Dihydroniloticin synthase CYP71CD1 (512 aa).

Residues 7 to 27 (YFTVTSLLVFLTFLLRLVWGW) form a helical membrane-spanning segment. Cys451 serves as a coordination point for heme.

The protein belongs to the cytochrome P450 family. The cofactor is heme. In terms of tissue distribution, accumulates in mature fruits and in juice vesicles.

The protein resides in the membrane. It catalyses the reaction tirucalla-7,24-dien-3beta-ol + 2 reduced [NADPH--hemoprotein reductase] + 2 O2 = dihydroniloticin + 2 oxidized [NADPH--hemoprotein reductase] + 2 H2O + 2 H(+). The protein operates within secondary metabolite biosynthesis; terpenoid biosynthesis. Its function is as follows. Monooxygenase involved in the biosynthesis of limonoids triterpene natural products such as limonin, a compound with insecticidal activity responsible for the bitter taste in citrus. Catalyzes the conversion of tirucalladienol to dihydroniloticin. The sequence is that of Dihydroniloticin synthase CYP71CD1 from Citrus sinensis (Sweet orange).